Reading from the N-terminus, the 869-residue chain is MFRVLNKVFDNNQRDVQRIIKTVVDPVNALEQETMQIEDLAAAFLDLRRRVQEGGESLDDVLVPAFALIREAGRRSIGKRHYDVQLIGGAALHQGRIAEMRTGEGKTLVATLALSLNALEGRGCHLVTVNDYLARVGMEEMGLLYRTLGLTVGLASREMQPHEKQAAYACDITYVTNSELGFDYLRDNMAQSREALAMRAEHPLNYAIVDEVDSILIDEARTPLIISGAAEKATDLYYVYAKLIRRLQKGEPAEPGVRAEPTGDYTIDEKGKQVHITEAGISKIERLLSIPDLYSPENMDKAHMITQAIRAKELYHREKDYIINADGEVIIIDEFTGRSMPGRRYGEGLHQAIEAKENVKIENENQTLATITYQNFFRLYNKFAGMTGTAKTEEKEFLDIYGSDVLVIPTNRTILRKDSEDLVYRTKMGKYAAVVQEVAEMHATGRPVLIGTASIVTSEQLSDLLTQAGIRHSVLNAKFEAQEASIVAQAGRSGTVTIATNMAGRGTDIMLGGNAEFILGESIEQHLGISRFAPEAENFIKAISRQDPAAEMLGMQIPGMTPEFIQQAQQLQADTVADRARVQELGGLHIIGTERHESRRIDNQLRGRAGRQGDPGSSRFYVSFEDDLMRLFANDRVVAMMDRLGMDDSQPIEAKMVTGAIEKAQARVEDRNFSTRKQLLEFDNVMSKQRDTIYAQRREVLLGPDEDVEESTEGMIADFVDMQLAIHAPADQSPDAWDIEGLQAAIVDAVPQLEGFDFESLRHGSPAQAQDRLLSAVADAFDSRREELGSTMLNSLARYVLLQVVDQHWKEHLHGMDVLRQGIGLRGYGQRDPFTEYKFEATNMFNEMIDNLKSDVTKFIFRMQFGQTG.

ATP is bound by residues glutamine 85, 103–107 (GEGKT), and aspartate 508.

The protein belongs to the SecA family. Monomer and homodimer. Part of the essential Sec protein translocation apparatus which comprises SecA, SecYEG and auxiliary proteins SecDF. Other proteins may also be involved.

It is found in the cell membrane. The protein resides in the cytoplasm. The enzyme catalyses ATP + H2O + cellular proteinSide 1 = ADP + phosphate + cellular proteinSide 2.. In terms of biological role, part of the Sec protein translocase complex. Interacts with the SecYEG preprotein conducting channel. Has a central role in coupling the hydrolysis of ATP to the transfer of proteins into and across the cell membrane, serving as an ATP-driven molecular motor driving the stepwise translocation of polypeptide chains across the membrane. The protein is Protein translocase subunit SecA of Deinococcus deserti (strain DSM 17065 / CIP 109153 / LMG 22923 / VCD115).